The following is a 493-amino-acid chain: MGLDAVKAKGNWKSEKPKETENKNHKKKNGDDNKSRNEEEEEGEASGCWVKFRFMIGCIPSKSDLDASSSSIYGSNCTVTTMESKSANEKSNDQPVGQVSSTTTTSNAESSSSTPVISEELNISSHLRKFTFNDLKLSTRNFRPESLLGEGGFGCVFKGWIEENGTAPVKPGTGLTVAVKTLNPDGLQGHKEWLAEINFLGNLLHPNLVKLVGYCIEDDQRLLVYEFMPRGSLENHLFRRSLPLPWSIRMKIALGAAKGLSFLHEEALKPVIYRDFKTSNILLDADYNAKLSDFGLAKDAPDEGKTHVSTRVMGTYGYAAPEYVMTGHLTSKSDVYSFGVVLLEMLTGRRSMDKNRPNGEHNLVEWARPHLLDKRRFYRLLDPRLEGHFSIKGAQKVTQLAAQCLSRDPKIRPKMSDVVEALKPLPHLKDMASSSYYFQTMQAERLKNGSGRSQGFGSRNGQHQPVFRTLSSPHGSSPYRHQIPSPKPKGATT.

2 disordered regions span residues 1–42 (MGLD…EEEE) and 84–117 (SKSANEKSNDQPVGQVSSTTTTSNAESSSSTPVI). G2 is lipidated: N-myristoyl glycine. A compositionally biased stretch (basic and acidic residues) spans 12–37 (WKSEKPKETENKNHKKKNGDDNKSRN). Positions 100-114 (SSTTTTSNAESSSST) are enriched in low complexity. The residue at position 131 (T131) is a Phosphothreonine. Positions 142 to 428 (FRPESLLGEG…VEALKPLPHL (287 aa)) constitute a Protein kinase domain. ATP is bound by residues 148–156 (LGEGGFGCV) and K180. The residue at position 225 (Y225) is a Phosphotyrosine. Catalysis depends on D275, which acts as the Proton acceptor. S279 is modified (phosphoserine). Residue T306 is modified to Phosphothreonine. S309 is modified (phosphoserine). 2 positions are modified to phosphothreonine: T310 and T315. A Phosphotyrosine modification is found at Y323. Positions 447 to 493 (KNGSGRSQGFGSRNGQHQPVFRTLSSPHGSSPYRHQIPSPKPKGATT) are disordered. A compositionally biased stretch (polar residues) spans 450–475 (SGRSQGFGSRNGQHQPVFRTLSSPHG).

Belongs to the protein kinase superfamily. Ser/Thr protein kinase family. In terms of assembly, interacts with the Xanthomonas campestris effector XopAC/AvrAC. Interacts with SD129. Post-translationally, phosphorylated by SD129 at Thr-306 and Thr-310 in response to the pathogen-associated molecular pattern (PAMP) 3-OH-C10:0, a medium-chain 3-hydroxy fatty acid.

It is found in the cell membrane. It carries out the reaction L-seryl-[protein] + ATP = O-phospho-L-seryl-[protein] + ADP + H(+). The catalysed reaction is L-threonyl-[protein] + ATP = O-phospho-L-threonyl-[protein] + ADP + H(+). Its function is as follows. Involved in chitin-triggered immune signaling and is required for reactive oxygen species (ROS) production. Acts downstream of SD129 in defense signaling triggered by the pathogen-associated molecular pattern (PAMP) 3-OH-C10:0, a medium-chain 3-hydroxy fatty acid. In Arabidopsis thaliana (Mouse-ear cress), this protein is Serine/threonine-protein kinase PBL34.